The primary structure comprises 499 residues: Cytochrome P450 76T24 (499 aa).

A helical membrane pass occupies residues 3–23 (VDILLSLVLAFFGWAAIYFLT). N-linked (GlcNAc...) asparagine glycans are attached at residues Asn55, Asn76, Asn279, and Asn284. Residue Cys442 participates in heme binding.

Belongs to the cytochrome P450 family.

It localises to the membrane. The sequence is that of Cytochrome P450 76T24 from Catharanthus roseus (Madagascar periwinkle).